Consider the following 259-residue polypeptide: Polycomb group RING finger protein 1 (259 aa).

The residue at position 2 (Ala-2) is an N-acetylalanine. Phosphoserine is present on Ser-3. A Glycyl lysine isopeptide (Lys-Gly) (interchain with G-Cter in SUMO2) cross-link involves residue Lys-24. The RING-type zinc-finger motif lies at 47–86; that stretch reads CCLCAGYFVDATTITECLHTFCKSCIVKYLQTSKYCPMCN. Residues 86–247 are necessary for repressor activity; that stretch reads NIKIHETQPL…LSHWFGKPSP (162 aa). A Glycyl lysine isopeptide (Lys-Gly) (interchain with G-Cter in SUMO2) cross-link involves residue Lys-88. The required for the interaction with the KDM2B-SKP1 heterodimeric complex stretch occupies residues 150–255; sequence LPFSSFDHSK…SPLLLQYSVK (106 aa). The RING-finger and WD40-associated ubiquitin-like domain (RAWUL); sufficient for interaction with BCOR and BCORL1 stretch occupies residues 167 to 255; sequence EQLSLCLERL…SPLLLQYSVK (89 aa).

Interacts with BCORL1, forming heterodimers. The PCGF1-BCORL1 heterodimeric complex interacts with the KDM2B-SKP1 heterodimeric complex to form a homotetrameric polycomb repression complex 1 (PRC1.1). Component of the repressive BCOR complex containing a Polycomb group subcomplex at least composed of RYBP, RING1 and RNF2/RING2. Specifically interacts with BCOR, RING1 and RNF2/RING2. Component of a PRC1-like complex. Interacts with CBX6, CBX7 and CBX8. Interacts with DPPA4, NANOG, POU5F1 and RYBP.

It is found in the nucleus. Its function is as follows. Component of the Polycomb group (PcG) multiprotein BCOR complex, a complex required to maintain the transcriptionally repressive state of some genes, such as BCL6 and the cyclin-dependent kinase inhibitor, CDKN1A. Transcriptional repressor that may be targeted to the DNA by BCL6; this transcription repressor activity may be related to PKC signaling pathway. Represses CDKN1A expression by binding to its promoter, and this repression is dependent on the retinoic acid response element (RARE element). Promotes cell cycle progression and enhances cell proliferation as well. May have a positive role in tumor cell growth by down-regulating CDKN1A. Component of a Polycomb group (PcG) multiprotein PRC1-like complex, a complex class required to maintain the transcriptionally repressive state of many genes, including Hox genes, throughout development. PcG PRC1 complex acts via chromatin remodeling and modification of histones; it mediates monoubiquitination of histone H2A 'Lys-119', rendering chromatin heritably changed in its expressibility. Within the PRC1-like complex, regulates RNF2 ubiquitin ligase activity. Regulates the expression of DPPA4 and NANOG in the NT2 embryonic carcinoma cells. In Bos taurus (Bovine), this protein is Polycomb group RING finger protein 1 (PCGF1).